Reading from the N-terminus, the 165-residue chain is Peptide methionine sulfoxide reductase MsrA (165 aa).

The active site involves Cys11.

Belongs to the MsrA Met sulfoxide reductase family.

The enzyme catalyses L-methionyl-[protein] + [thioredoxin]-disulfide + H2O = L-methionyl-(S)-S-oxide-[protein] + [thioredoxin]-dithiol. It catalyses the reaction [thioredoxin]-disulfide + L-methionine + H2O = L-methionine (S)-S-oxide + [thioredoxin]-dithiol. Has an important function as a repair enzyme for proteins that have been inactivated by oxidation. Catalyzes the reversible oxidation-reduction of methionine sulfoxide in proteins to methionine. This chain is Peptide methionine sulfoxide reductase MsrA, found in Ureaplasma parvum serovar 3 (strain ATCC 27815 / 27 / NCTC 11736).